Consider the following 219-residue polypeptide: Carboxypeptidase Y inhibitor (219 aa).

M1 is subject to N-acetylmethionine.

It belongs to the phosphatidylethanolamine-binding protein family. In terms of assembly, monomer.

The protein resides in the cytoplasm. In terms of biological role, specific and potent inhibitor of carboxypeptidase Y. This Saccharomyces cerevisiae (strain ATCC 204508 / S288c) (Baker's yeast) protein is Carboxypeptidase Y inhibitor (TFS1).